Reading from the N-terminus, the 486-residue chain is Bile acid receptor (486 aa).

Residue Lys132 forms a Glycyl lysine isopeptide (Lys-Gly) (interchain with G-Cter in SUMO1) linkage. The segment at residues 134–209 (DELCVVCGDR…MGMLAECMYT (76 aa)) is a DNA-binding region (nuclear receptor). The segment at 137 to 157 (CVVCGDRASGYHYNALTCEGC) adopts an NR C4-type zinc-finger fold. 2 positions are modified to phosphoserine; by PKC/PRKCA: Ser145 and Ser164. Lys167 is subject to N6-acetyllysine; by EP300. The NR C4-type zinc finger occupies 173-197 (CKNGGNCVMDMYMRRKCQECRLRKC). Lys220 is modified (N6-methyllysine; by SETD7). Lys227 is modified (N6-acetyllysine; by EP300). An NR LBD domain is found at 262 to 486 (DQQTLLHFIM…PLLCEIWDVQ (225 aa)). Residue Lys289 forms a Glycyl lysine isopeptide (Lys-Gly) (interchain with G-Cter in SUMO1) linkage. Chenodeoxycholate-binding residues include Arg345, Tyr375, and Tyr383. Residue Thr456 is modified to Phosphothreonine; by PKC/PRKCZ. His461 is a binding site for chenodeoxycholate.

The protein belongs to the nuclear hormone receptor family. NR1 subfamily. As to quaternary structure, heterodimer (via C-terminus) with RXRA (via DBD); the heterodimerization enhances the binding affinity for LXXLL motifs from coactivators. Binds DNA predominantly as a heterodimer with RXRA. After activation by agonist binding interacts with coactivators. Interacts with NCOA1, NCOA2, PPARGC1A, CARM1, SETD7, PRMT1, GPS2, SMARCA4 and MED1. Interacts with EP300 and SMARCD1. Interacts with XRCC5 and XRCC6; decreasing NR1H4/FXR transactivation activity towards ABCB11/BSEP. Interacts with PAGR1 and NCOA6; indicative for an association with an MLL2/MLL3 complex (ASCOM). In terms of processing, acetylated by EP300. Lys-227 as is the major acetylation site for EP300; the dynamicly regulated acetylation inhibits heterodimerization with RXRA and transactivation activity. Deacetylated by SIRT1. Methylation may increase transactivation of target genes. Post-translationally, phosphorylation by PKC/PRKCA increases transactivation activity by promoting association with PPARGC1A. In terms of processing, sumoylated upon ligand binding. As to expression, liver and hepatocyte-related cells express mainly FXRalpha1-type isoforms with isoform 3 and isoform 4 in approximately equal proportions. In intestine and kidney mainly FXRalpha2-type isoforms are expressed with isoform 1 and isoform 2 in approximately equal proportions. Expressed in pancreatic beta cells and macrophages.

It localises to the nucleus. In terms of biological role, ligand-activated transcription factor. Receptor for bile acids (BAs) such as chenodeoxycholic acid (CDCA), lithocholic acid, deoxycholic acid (DCA) and allocholic acid (ACA). Plays a essential role in BA homeostasis through the regulation of genes involved in BA synthesis, conjugation and enterohepatic circulation. Also regulates lipid and glucose homeostasis and is involved innate immune response. The FXR-RXR heterodimer binds predominantly to farnesoid X receptor response elements (FXREs) containing two inverted repeats of the consensus sequence 5'-AGGTCA-3' in which the monomers are spaced by 1 nucleotide (IR-1) but also to tandem repeat DR1 sites with lower affinity, and can be activated by either FXR or RXR-specific ligands. It is proposed that monomeric nuclear receptors such as NR5A2/LRH-1 bound to coregulatory nuclear responsive element (NRE) halfsites located in close proximity to FXREs modulate transcriptional activity. In the liver activates transcription of the corepressor NR0B2 thereby indirectly inhibiting CYP7A1 and CYP8B1 (involved in BA synthesis) implicating at least in part histone demethylase KDM1A resulting in epigenomic repression, and SLC10A1/NTCP (involved in hepatic uptake of conjugated BAs). Activates transcription of the repressor MAFG (involved in regulation of BA synthesis). Activates transcription of SLC27A5/BACS and BAAT (involved in BA conjugation), ABCB11/BSEP (involved in bile salt export) by directly recruiting histone methyltransferase CARM1, and ABCC2/MRP2 (involved in secretion of conjugated BAs) and ABCB4 (involved in secretion of phosphatidylcholine in the small intestine). Activates transcription of SLC27A5/BACS and BAAT (involved in BA conjugation), ABCB11/BSEP (involved in bile salt export) by directly recruiting histone methyltransferase CARM1, and ABCC2/MRP2 (involved in secretion of conjugated BAs) and ABCB4 (involved in secretion of phosphatidylcholine in the small intestine). In the intestine activates FGF19 expression and secretion leading to hepatic CYP7A1 repression. The function also involves the coordinated induction of hepatic KLB/beta-klotho expression. Regulates transcription of liver UGT2B4 and SULT2A1 involved in BA detoxification; binding to the UGT2B4 promoter seems to imply a monomeric transactivation independent of RXRA. Modulates lipid homeostasis by activating liver NR0B2/SHP-mediated repression of SREBF1 (involved in de novo lipogenesis), expression of PLTP (involved in HDL formation), SCARB1 (involved in HDL hepatic uptake), APOE, APOC1, APOC4, PPARA (involved in beta-oxidation of fatty acids), VLDLR and SDC1 (involved in the hepatic uptake of LDL and IDL remnants), and inhibiting expression of MTTP (involved in VLDL assembly. Increases expression of APOC2 (promoting lipoprotein lipase activity implicated in triglyceride clearance). Transrepresses APOA1 involving a monomeric competition with NR2A1 for binding to a DR1 element. Also reduces triglyceride clearance by inhibiting expression of ANGPTL3 and APOC3 (both involved in inhibition of lipoprotein lipase). Involved in glucose homeostasis by modulating hepatic gluconeogenesis through activation of NR0B2/SHP-mediated repression of respective genes. Modulates glycogen synthesis (inducing phosphorylation of glycogen synthase kinase-3). Modulates glucose-stimulated insulin secretion and is involved in insulin resistance. Involved in intestinal innate immunity. Plays a role in protecting the distal small intestine against bacterial overgrowth and preservation of the epithelial barrier. Down-regulates inflammatory cytokine expression in several types of immune cells including macrophages and mononuclear cells. Mediates trans-repression of TLR4-induced cytokine expression; the function seems to require its sumoylation and prevents N-CoR nuclear receptor corepressor clearance from target genes such as IL1B and NOS2. Involved in the TLR9-mediated protective mechanism in intestinal inflammation. Plays an anti-inflammatory role in liver inflammation; proposed to inhibit pro-inflammatory (but not antiapoptotic) NF-kappa-B signaling). Functionally, promotes transcriptional activation of target genes NR0B2/SHP (inducible by unconjugated CDCA), SLC51B/OSTB (inducible by unconjugated CDCA and DCA) and FABP6/IBAP; low activity for ABCB11/BSEP (inducible by unconjugated CDCA, DCA and ACA); not inducible by taurine- and glycine-amidated CDCA. Promotes transcriptional activation of target genes ABCB11/BSEP (inducible by unconjugated CDCA, DCA and ACA), NR0B2/SHP (inducible by unconjugated CDCA DCA and ACA), SLC51B/OSTB (inducible by unconjugated CDCA and DCA) and FABP6/IBAP; not inducible by taurine- and glycine-amidated CDCA. Its function is as follows. Promotes transcriptional activation of target genes NR0B2/SHP (inducible by unconjugated CDCA), SLC51B/OSTB (inducible by unconjugated CDCA and DCA) and IBAP; low activity for ABCB11/BSEP (inducible by unconjugated CDCA, DCA and ACA); not inducible by taurine- and glycine-amidated CDCA. In terms of biological role, promotes transcriptional activation of target genes ABCB11/BSEP (inducible by unconjugated CDCA, ACA and DCA), NR0B2/SHP (inducible by unconjugated CDCA, ACA and DCA), SLC51B/OSTB (inducible by unconjugated CDCA and DCA) and FABP6/IBAP; most efficient isoform compared to isoforms 1 to 3; not inducible by taurine- and glycine-amidated CDCA. The sequence is that of Bile acid receptor (NR1H4) from Homo sapiens (Human).